A 148-amino-acid polypeptide reads, in one-letter code: UPF0756 membrane protein YeaL (148 aa).

The next 4 membrane-spanning stretches (helical) occupy residues Ala-14–Val-34, Leu-51–Leu-71, Phe-80–Gly-100, and Val-121–Val-141.

It belongs to the UPF0756 family.

The protein resides in the cell membrane. This is UPF0756 membrane protein YeaL from Escherichia fergusonii (strain ATCC 35469 / DSM 13698 / CCUG 18766 / IAM 14443 / JCM 21226 / LMG 7866 / NBRC 102419 / NCTC 12128 / CDC 0568-73).